Here is a 151-residue protein sequence, read N- to C-terminus: Nucleoside diphosphate kinase (151 aa).

ATP contacts are provided by Lys-11, Phe-59, Arg-87, Thr-93, Arg-104, and Asn-114. Catalysis depends on His-117, which acts as the Pros-phosphohistidine intermediate.

The protein belongs to the NDK family. In terms of assembly, homotetramer. The cofactor is Mg(2+).

Its subcellular location is the cytoplasm. It carries out the reaction a 2'-deoxyribonucleoside 5'-diphosphate + ATP = a 2'-deoxyribonucleoside 5'-triphosphate + ADP. The enzyme catalyses a ribonucleoside 5'-diphosphate + ATP = a ribonucleoside 5'-triphosphate + ADP. Major role in the synthesis of nucleoside triphosphates other than ATP. The ATP gamma phosphate is transferred to the NDP beta phosphate via a ping-pong mechanism, using a phosphorylated active-site intermediate. The polypeptide is Nucleoside diphosphate kinase (Prochlorococcus marinus (strain NATL1A)).